The following is a 175-amino-acid chain: ATP-dependent protease subunit HslV (175 aa).

T2 is a catalytic residue. Residues A156, C159, and T162 each coordinate Na(+).

This sequence belongs to the peptidase T1B family. HslV subfamily. In terms of assembly, a double ring-shaped homohexamer of HslV is capped on each side by a ring-shaped HslU homohexamer. The assembly of the HslU/HslV complex is dependent on binding of ATP.

It is found in the cytoplasm. It catalyses the reaction ATP-dependent cleavage of peptide bonds with broad specificity.. With respect to regulation, allosterically activated by HslU binding. In terms of biological role, protease subunit of a proteasome-like degradation complex believed to be a general protein degrading machinery. The sequence is that of ATP-dependent protease subunit HslV from Rhizobium johnstonii (strain DSM 114642 / LMG 32736 / 3841) (Rhizobium leguminosarum bv. viciae).